A 312-amino-acid chain; its full sequence is 2-dehydropantoate 2-reductase (312 aa).

NADP(+) is bound by residues 7–12, asparagine 105, and alanine 131; that span reads GAGAMG. Asparagine 105 serves as a coordination point for substrate. The active-site Proton donor is lysine 187. 3 residues coordinate substrate: asparagine 191, asparagine 195, and serine 260. NADP(+) is bound at residue glutamate 273.

The protein belongs to the ketopantoate reductase family.

It localises to the cytoplasm. The catalysed reaction is (R)-pantoate + NADP(+) = 2-dehydropantoate + NADPH + H(+). It functions in the pathway cofactor biosynthesis; (R)-pantothenate biosynthesis; (R)-pantoate from 3-methyl-2-oxobutanoate: step 2/2. Catalyzes the NADPH-dependent reduction of ketopantoate into pantoic acid. This is 2-dehydropantoate 2-reductase from Lactococcus lactis subsp. lactis (strain IL1403) (Streptococcus lactis).